Reading from the N-terminus, the 477-residue chain is Iroquois homeobox protein 6a (477 aa).

Positions 148–210 form a DNA-binding region, homeobox; sequence GSTRRKNATR…NARRRLKKEN (63 aa). Disordered regions lie at residues 209–282 and 303–323; these read ENKM…PDIP and DYLD…QSTS. Residues 219 to 237 show a composition bias toward basic and acidic residues; the sequence is KAGDDRKEDLDSKDSKDEQ. A compositionally biased stretch (acidic residues) spans 243–253; it reads DLDDMEDEDCD. Residues 254 to 264 show a composition bias toward basic and acidic residues; that stretch reads KLDSDCEKSGQ. Residues 310 to 321 are compositionally biased toward low complexity; the sequence is SKPQQQQPSPQS.

The protein belongs to the TALE/IRO homeobox family.

The protein resides in the nucleus. Transcription factor. Binds to the iroquois binding site (IBS) motif of target genes to regulate gene expression; functions as a transcriptional activator or repressor. In concert with irx5a, plays a role in visual performance. This chain is Iroquois homeobox protein 6a, found in Danio rerio (Zebrafish).